The chain runs to 499 residues: Membrane-associated tyrosine- and threonine-specific cdc2-inhibitory kinase (499 aa).

At Met-1 the chain carries N-acetylmethionine. The disordered stretch occupies residues 1–29 (MLERPPALAMPMPTEGTPPPLSGTPIPVP). Residues 16–28 (GTPPPLSGTPIPV) are compositionally biased toward pro residues. The residue at position 17 (Thr-17) is a Phosphothreonine. Ser-40 carries the phosphoserine modification. A disordered region spans residues 42-72 (KRPRGLSRSLPPPPPAKGSIPISRLFPPRTP). Phosphoserine is present on residues Ser-94 and Ser-120. Positions 110–359 (FQRLSRLGHG…AEALLALPVL (250 aa)) constitute a Protein kinase domain. ATP-binding positions include 116–124 (LGHGSYGEV) and Lys-139. 2 positions are modified to phosphoserine: Ser-143 and Ser-160. Asp-233 functions as the Proton acceptor in the catalytic mechanism. Residues Asn-238, Asp-251, and Gly-253 each contribute to the Mg(2+) site. The short motif at 382–398 (LWQALLALLCWLWHGLA) is the Membrane-association motif element. An interaction with PIN1 region spans residues 398-499 (AHPASWLQPL…SLFEDTLDPT (102 aa)). A Phosphoserine; by PLK1 modification is found at Ser-426. Positions 437-499 (GPSLSPEAVL…SLFEDTLDPT (63 aa)) are interaction with CDC2-CCNB1. The interval 451–485 (GSTSTPRSRCTPRDALDLSDINSEPPRGSFPSFEP) is disordered. A phosphoserine mark is found at Ser-469, Ser-473, and Ser-482. Phosphothreonine; by PLK1 is present on Thr-495.

It belongs to the protein kinase superfamily. Ser/Thr protein kinase family. WEE1 subfamily. In terms of assembly, interacts with CDC2-CCNB1 complex. Can also interact with PIN1 when phosphorylated by CDC2-CCNB1. Autophosphorylated. Phosphorylated by CDC2-CCNB1 complexes on undefined serine and threonine residues. The phosphorylation by CDC2-CCNB1 complexes may inhibit the catalytic activity.

It localises to the endoplasmic reticulum membrane. It is found in the golgi apparatus membrane. It carries out the reaction L-seryl-[protein] + ATP = O-phospho-L-seryl-[protein] + ADP + H(+). The catalysed reaction is L-threonyl-[protein] + ATP = O-phospho-L-threonyl-[protein] + ADP + H(+). Negatively regulated by hyperphosphorylation during mitosis. The hyperphosphorylated form does not associate with CCNB1-CDC2 complexes. The PLK1 protein kinase may be required for mitotic phosphorylation. Acts as a negative regulator of entry into mitosis (G2 to M transition) by phosphorylation of the CDK1 kinase specifically when CDK1 is complexed to cyclins. Mediates phosphorylation of CDK1 predominantly on 'Thr-14'. Also involved in Golgi fragmentation. May be involved in phosphorylation of CDK1 on 'Tyr-15' to a lesser degree, however tyrosine kinase activity is unclear and may be indirect. This is Membrane-associated tyrosine- and threonine-specific cdc2-inhibitory kinase (PKMYT1) from Homo sapiens (Human).